Reading from the N-terminus, the 747-residue chain is DNA topoisomerase 4 subunit A (747 aa).

The 464-residue stretch at 35-498 (LPFIGDGLKP…EAKMISESDM (464 aa)) folds into the Topo IIA-type catalytic domain. Tyrosine 124 functions as the O-(5'-phospho-DNA)-tyrosine intermediate in the catalytic mechanism.

Belongs to the type II topoisomerase GyrA/ParC subunit family. ParC type 1 subfamily. In terms of assembly, heterotetramer composed of ParC and ParE.

It is found in the cell membrane. It carries out the reaction ATP-dependent breakage, passage and rejoining of double-stranded DNA.. Topoisomerase IV is essential for chromosome segregation. It relaxes supercoiled DNA. Performs the decatenation events required during the replication of a circular DNA molecule. The chain is DNA topoisomerase 4 subunit A from Haemophilus influenzae (strain ATCC 51907 / DSM 11121 / KW20 / Rd).